The following is a 425-amino-acid chain: Actin-related protein 3 (425 aa).

Belongs to the actin family. ARP3 subfamily. As to quaternary structure, component of the Arp2/3 complex, at least composed of arx-1, arx-2, arx-4 and arx-6.

It localises to the cytoplasm. It is found in the cytoskeleton. Its function is as follows. Functions as ATP-binding component of the Arp2/3 complex which is involved in regulation of actin polymerization and together with an activating nucleation-promoting factor (NPF) mediates the formation of branched actin networks. Seems to contact the pointed end of the daughter actin filament. Plays a role in time-dependent memory loss and the retention of conditioned behavior over time. This chain is Actin-related protein 3, found in Caenorhabditis elegans.